The sequence spans 326 residues: Phospho-N-acetylmuramoyl-pentapeptide-transferase (326 aa).

A run of 9 helical transmembrane segments spans residues Ile3–Ile23, Thr51–Phe71, Val79–Leu99, Leu115–Met135, Ile138–Val158, Gly169–Ala189, Met195–Asn215, Val221–His243, and Val304–Tyr324.

This sequence belongs to the glycosyltransferase 4 family. MraY subfamily. Requires Mg(2+) as cofactor.

It localises to the cell membrane. The catalysed reaction is UDP-N-acetyl-alpha-D-muramoyl-L-alanyl-gamma-D-glutamyl-L-lysyl-D-alanyl-D-alanine + di-trans,octa-cis-undecaprenyl phosphate = Mur2Ac(oyl-L-Ala-gamma-D-Glu-L-Lys-D-Ala-D-Ala)-di-trans,octa-cis-undecaprenyl diphosphate + UMP. It functions in the pathway cell wall biogenesis; peptidoglycan biosynthesis. In terms of biological role, catalyzes the initial step of the lipid cycle reactions in the biosynthesis of the cell wall peptidoglycan: transfers peptidoglycan precursor phospho-MurNAc-pentapeptide from UDP-MurNAc-pentapeptide onto the lipid carrier undecaprenyl phosphate, yielding undecaprenyl-pyrophosphoryl-MurNAc-pentapeptide, known as lipid I. This Streptococcus pneumoniae (strain Hungary19A-6) protein is Phospho-N-acetylmuramoyl-pentapeptide-transferase.